Here is a 239-residue protein sequence, read N- to C-terminus: Large ribosomal subunit protein uL3 (239 aa).

Position 151 is an N5-methylglutamine (Gln151).

The protein belongs to the universal ribosomal protein uL3 family. Part of the 50S ribosomal subunit. Forms a cluster with proteins L14 and L19. Post-translationally, methylated by PrmB.

One of the primary rRNA binding proteins, it binds directly near the 3'-end of the 23S rRNA, where it nucleates assembly of the 50S subunit. The protein is Large ribosomal subunit protein uL3 of Ruegeria sp. (strain TM1040) (Silicibacter sp.).